The sequence spans 131 residues: Large ribosomal subunit protein bL17 (131 aa).

Belongs to the bacterial ribosomal protein bL17 family. In terms of assembly, part of the 50S ribosomal subunit. Contacts protein L32.

This Herminiimonas arsenicoxydans protein is Large ribosomal subunit protein bL17.